A 141-amino-acid polypeptide reads, in one-letter code: Hemoglobin D subunit alpha (141 aa).

Residues 1–141 (MLTEDDKQLI…VSAVLAEKYR (141 aa)) enclose the Globin domain. His58 serves as a coordination point for O2. His87 contributes to the heme b binding site.

It belongs to the globin family. As to quaternary structure, tetramer of two alpha chains and two beta chains. As to expression, red blood cells.

Its function is as follows. Involved in oxygen transport from the lung to the various peripheral tissues. This chain is Hemoglobin D subunit alpha, found in Aldabrachelys gigantea (Aldabra giant tortoise).